The following is a 138-amino-acid chain: Cellular retinoic acid-binding protein 2 (138 aa).

Residues 21–31 carry the Nuclear localization signal motif; the sequence is KALGVNMMMRK. K102 is covalently cross-linked (Glycyl lysine isopeptide (Lys-Gly) (interchain with G-Cter in SUMO)). An all-trans-retinoate-binding site is contributed by 133–135; sequence RVY.

The protein belongs to the calycin superfamily. Fatty-acid binding protein (FABP) family. As to quaternary structure, interacts with importin alpha. Interacts with RXR and RARA. In terms of processing, sumoylated in response to retinoic acid binding, sumoylation is critical for dissociation from ER and subsequent nuclear translocation. In terms of tissue distribution, embryo and skin of adult mouse.

Its subcellular location is the cytoplasm. It is found in the endoplasmic reticulum. The protein localises to the nucleus. In terms of biological role, transports retinoic acid to the nucleus. Regulates the access of retinoic acid to the nuclear retinoic acid receptors. This Mus musculus (Mouse) protein is Cellular retinoic acid-binding protein 2 (Crabp2).